We begin with the raw amino-acid sequence, 131 residues long: Small ribosomal subunit protein bS6 (131 aa).

The disordered stretch occupies residues 100-131 (SPMVKAKDERRERREDFANETSDDADAGDSEE). Basic and acidic residues predominate over residues 104-116 (KAKDERRERREDF). The span at 120–131 (TSDDADAGDSEE) shows a compositional bias: acidic residues.

The protein belongs to the bacterial ribosomal protein bS6 family.

Its function is as follows. Binds together with bS18 to 16S ribosomal RNA. The chain is Small ribosomal subunit protein bS6 from Erwinia tasmaniensis (strain DSM 17950 / CFBP 7177 / CIP 109463 / NCPPB 4357 / Et1/99).